The primary structure comprises 187 residues: Resolvase OPG149 (187 aa).

It belongs to the RuvC family. Poxviruses-type subfamily. Requires Mg(2+) as cofactor.

Its function is as follows. Plays a role in DNA replication by cleaving viral DNA concatamers to yield unit-length viral genomes. The concatamer junctions contain inverted repeat sequences that can be extruded as cruciforms, yielding Holliday junctions that A22 protein cleaves. In Vaccinia virus (strain Western Reserve) (VACV), this protein is Resolvase OPG149 (OPG149).